We begin with the raw amino-acid sequence, 104 residues long: Replication restart protein PriB (104 aa).

One can recognise an SSB domain in the interval 1–101 (MTNRLALSGT…LHAEQIELID (101 aa)).

Belongs to the PriB family. Homodimer. Interacts with PriA and DnaT. Component of the replication restart primosome. Primosome assembly occurs via a 'hand-off' mechanism. PriA binds to replication forks, subsequently PriB then DnaT bind; DnaT then displaces ssDNA to generate the helicase loading substrate.

Functionally, involved in the restart of stalled replication forks, which reloads the replicative helicase on sites other than the origin of replication; the PriA-PriB pathway is the major replication restart pathway. During primosome assembly it facilitates complex formation between PriA and DnaT on DNA; stabilizes PriA on DNA. Stimulates the DNA unwinding activity of PriA helicase. In Citrobacter koseri (strain ATCC BAA-895 / CDC 4225-83 / SGSC4696), this protein is Replication restart protein PriB.